Consider the following 126-residue polypeptide: Holo-[acyl-carrier-protein] synthase (126 aa).

Mg(2+) is bound by residues aspartate 8 and glutamate 57.

The protein belongs to the P-Pant transferase superfamily. AcpS family. Mg(2+) is required as a cofactor.

The protein localises to the cytoplasm. The catalysed reaction is apo-[ACP] + CoA = holo-[ACP] + adenosine 3',5'-bisphosphate + H(+). In terms of biological role, transfers the 4'-phosphopantetheine moiety from coenzyme A to a Ser of acyl-carrier-protein. This chain is Holo-[acyl-carrier-protein] synthase, found in Geobacter metallireducens (strain ATCC 53774 / DSM 7210 / GS-15).